A 127-amino-acid chain; its full sequence is Large ribosomal subunit protein bL17 (127 aa).

It belongs to the bacterial ribosomal protein bL17 family. In terms of assembly, part of the 50S ribosomal subunit. Contacts protein L32.

This Photobacterium profundum (strain SS9) protein is Large ribosomal subunit protein bL17.